The following is a 253-amino-acid chain: Phosphate import ATP-binding protein PstB 1 (253 aa).

The region spanning Leu7–Ile248 is the ABC transporter domain. Gly39–Ser46 is an ATP binding site.

Belongs to the ABC transporter superfamily. Phosphate importer (TC 3.A.1.7) family. In terms of assembly, the complex is composed of two ATP-binding proteins (PstB), two transmembrane proteins (PstC and PstA) and a solute-binding protein (PstS).

It localises to the cell membrane. It carries out the reaction phosphate(out) + ATP + H2O = ADP + 2 phosphate(in) + H(+). Functionally, part of the ABC transporter complex PstSACB involved in phosphate import. Responsible for energy coupling to the transport system. This is Phosphate import ATP-binding protein PstB 1 from Streptococcus pyogenes serotype M2 (strain MGAS10270).